The following is a 420-amino-acid chain: MATSLGSNTYNRQNWEDADFPILCQTCLGENPYIRMTKEKYGKECKICARPFTVFRWCPGVRMRFKKTEVCQTCSKLKNVCQTCLLDLEYGLPIQVRDAGLSFKDDMPKSDVNKEYYTQNMEREISNSDGTRPVGMLGKATSTSDMLLKLARTTPYYKRNRPHICSFWVKGECKRGEECPYRHEKPTDPDDPLADQNIKDRYYGINDPVADKLLKRASTMPRLDPPEDKTITTLYVGGLGDTITETDLRNHFYQFGEIRTITVVQRQQCAFIQFATRQAAEVAAEKSFNKFIVNGRRLNVKWGRSQAARGKEKEKDGTTDSGIKLEPVPGLPGALPPPPAAEEEASANYFNLPPSGPPAVVNIALPPPPGIAPPPPPGFGPHMFHPMGPPPPFMRAPGPIHYPSQDPQRMGAHAGKHSSP.

At Ala-2 the chain carries N-acetylalanine. Ser-4 and Ser-102 each carry phosphoserine. Glycyl lysine isopeptide (Lys-Gly) (interchain with G-Cter in SUMO2) cross-links involve residues Lys-139 and Lys-149. A C3H1-type zinc finger spans residues 159-186 (RNRPHICSFWVKGECKRGEECPYRHEKP). Position 212 is an N6-acetyllysine (Lys-212). In terms of domain architecture, RRM spans 232-305 (TTLYVGGLGD…RRLNVKWGRS (74 aa)). Residue Lys-290 forms a Glycyl lysine isopeptide (Lys-Gly) (interchain with G-Cter in SUMO2) linkage. Disordered regions lie at residues 303 to 343 (GRSQ…AAEE) and 372 to 420 (APPP…HSSP). The span at 309–318 (RGKEKEKDGT) shows a compositional bias: basic and acidic residues.

It belongs to the SLT11 family. In terms of assembly, component of the pre-catalytic and catalytic spliceosome complexes. Component of the postcatalytic spliceosome P complex. Interacts with PDCD6; the interaction induces translocation of PDCD6 in the cytoplasm. Interacts with PPIL1.

The protein resides in the nucleus. The protein localises to the cytoplasm. Required for pre-mRNA splicing as component of the activated spliceosome. Involved in the first step of pre-mRNA splicing. Binds directly to the internal stem-loop (ISL) domain of the U6 snRNA and to the pre-mRNA intron near the 5' splice site during the activation and catalytic phases of the spliceosome cycle. Involved in both translocations of the nuclear SLU7 to the cytoplasm and the cytosolic calcium-binding protein PDCD6 to the nucleus upon cellular stress responses. In Bos taurus (Bovine), this protein is Pre-mRNA-splicing factor RBM22 (RBM22).